Consider the following 277-residue polypeptide: Putative phosphoenolpyruvate synthase regulatory protein (277 aa).

An ADP-binding site is contributed by 157 to 164 (GVSRSGKT).

Belongs to the pyruvate, phosphate/water dikinase regulatory protein family. PSRP subfamily.

The enzyme catalyses [pyruvate, water dikinase] + ADP = [pyruvate, water dikinase]-phosphate + AMP + H(+). The catalysed reaction is [pyruvate, water dikinase]-phosphate + phosphate + H(+) = [pyruvate, water dikinase] + diphosphate. Its function is as follows. Bifunctional serine/threonine kinase and phosphorylase involved in the regulation of the phosphoenolpyruvate synthase (PEPS) by catalyzing its phosphorylation/dephosphorylation. The chain is Putative phosphoenolpyruvate synthase regulatory protein from Azoarcus sp. (strain BH72).